A 593-amino-acid chain; its full sequence is Bifunctional purine biosynthesis protein ATIC (593 aa).

The 147-residue stretch at 1–147 (MAARQQLALL…KNHARVTVVC (147 aa)) folds into the MGS-like domain. The interval 1-199 (MAARQQLALL…ISDYFRKEYS (199 aa)) is IMP cyclohydrolase. IMP contacts are provided by residues 13–15 (SEK), 35–38 (SGGT), 65–68 (RVKT), 102–103 (CN), and 126–127 (DI). Catalysis depends on Lys-138, which acts as the Proton donor/acceptor; for FAICAR cyclization activity. Position 200 is an N6-acetyllysine (Lys-200). The AICAR formyltransferase stretch occupies residues 200–593 (KGVSQLPLRY…IHTNLRLFHH (394 aa)). Residues 208-209 (RY), His-268, Gly-317, Asp-340, Asn-432, and Arg-452 contribute to the 5-amino-1-(5-phospho-beta-D-ribosyl)imidazole-4-carboxamide site. His-268 functions as the Proton acceptor; for AICAR formyltransferase activity in the catalytic mechanism. Ile-453 is a binding site for (6R)-10-formyltetrahydrofolate. Residue Phe-542 coordinates 5-amino-1-(5-phospho-beta-D-ribosyl)imidazole-4-carboxamide. Residues Asp-547 and 566 to 567 (SA) contribute to the (6R)-10-formyltetrahydrofolate site. 5-amino-1-(5-phospho-beta-D-ribosyl)imidazole-4-carboxamide is bound at residue Arg-589.

Belongs to the PurH family. As to quaternary structure, homodimer. Associates with internalized INSR complexes on Golgi/endosomal membranes. Interacts with INSR; ATIC together with PRKAA2/AMPK2 and HACD3/PTPLAD1 is proposed to be part of a signaling network regulating INSR autophosphorylation and endocytosis.

The protein resides in the cytoplasm. The protein localises to the cytosol. The catalysed reaction is (6R)-10-formyltetrahydrofolate + 5-amino-1-(5-phospho-beta-D-ribosyl)imidazole-4-carboxamide = 5-formamido-1-(5-phospho-D-ribosyl)imidazole-4-carboxamide + (6S)-5,6,7,8-tetrahydrofolate. It carries out the reaction 10-formyldihydrofolate + 5-amino-1-(5-phospho-beta-D-ribosyl)imidazole-4-carboxamide = 5-formamido-1-(5-phospho-D-ribosyl)imidazole-4-carboxamide + 7,8-dihydrofolate. The enzyme catalyses IMP + H2O = 5-formamido-1-(5-phospho-D-ribosyl)imidazole-4-carboxamide. It functions in the pathway purine metabolism; IMP biosynthesis via de novo pathway; 5-formamido-1-(5-phospho-D-ribosyl)imidazole-4-carboxamide from 5-amino-1-(5-phospho-D-ribosyl)imidazole-4-carboxamide (10-formyl THF route): step 1/1. Its pathway is purine metabolism; IMP biosynthesis via de novo pathway; IMP from 5-formamido-1-(5-phospho-D-ribosyl)imidazole-4-carboxamide: step 1/1. Its activity is regulated as follows. AMP and XMP inhibit AICAR formyltransferase activity. AICAR formyltransferase activity is competitively inhibited by 2-[5-hydroxy-3-methyl-1-(2-methyl-4-sulfo-phenyl)-1H-pyrazol-4-ylazo]-4-sulfo-benzoic acid (326203-A). FAICAR cyclization is competitively inhibited by 1,5-dihydroimidazo[4,5-c][1,2,6]thiadiazin-4(3H)-one-2,2-dioxide and the corresponding nucleoside and nucleoside monophosphate. Its function is as follows. Bifunctional enzyme that catalyzes the last two steps of purine biosynthesis. Acts as a transformylase that incorporates a formyl group to the AMP analog AICAR (5-amino-1-(5-phospho-beta-D-ribosyl)imidazole-4-carboxamide) to produce the intermediate formyl-AICAR (FAICAR). Can use both 10-formyldihydrofolate and 10-formyltetrahydrofolate as the formyl donor in this reaction. Also catalyzes the cyclization of FAICAR to inosine monophosphate (IMP). Promotes insulin receptor/INSR autophosphorylation and is involved in INSR internalization. The chain is Bifunctional purine biosynthesis protein ATIC (ATIC) from Gallus gallus (Chicken).